Reading from the N-terminus, the 166-residue chain is NAD(P)H-quinone oxidoreductase subunit I, chloroplastic (166 aa).

4Fe-4S ferredoxin-type domains lie at 55-84 and 95-124; these read GRIHFEFDKCIACEVCVRVCPIDLPVVDWK and LNYSIDFGICIFCGNCVEYCPTNCLSMTEE. [4Fe-4S] cluster is bound by residues Cys-64, Cys-67, Cys-70, Cys-74, Cys-104, Cys-107, Cys-110, and Cys-114.

It belongs to the complex I 23 kDa subunit family. NDH is composed of at least 16 different subunits, 5 of which are encoded in the nucleus. [4Fe-4S] cluster serves as cofactor.

Its subcellular location is the plastid. The protein resides in the chloroplast thylakoid membrane. It carries out the reaction a plastoquinone + NADH + (n+1) H(+)(in) = a plastoquinol + NAD(+) + n H(+)(out). The catalysed reaction is a plastoquinone + NADPH + (n+1) H(+)(in) = a plastoquinol + NADP(+) + n H(+)(out). NDH shuttles electrons from NAD(P)H:plastoquinone, via FMN and iron-sulfur (Fe-S) centers, to quinones in the photosynthetic chain and possibly in a chloroplast respiratory chain. The immediate electron acceptor for the enzyme in this species is believed to be plastoquinone. Couples the redox reaction to proton translocation, and thus conserves the redox energy in a proton gradient. The chain is NAD(P)H-quinone oxidoreductase subunit I, chloroplastic from Picradeniopsis absinthifolia (Hairyseed bahia).